Consider the following 282-residue polypeptide: NADPH-dependent 7-cyano-7-deazaguanine reductase (282 aa).

88–90 (IES) serves as a coordination point for substrate. 90–91 (SK) is an NADPH binding site. The active-site Thioimide intermediate is the cysteine 190. Aspartate 197 serves as the catalytic Proton donor. 229–230 (HE) is a substrate binding site. Residue 258–259 (RG) participates in NADPH binding.

Belongs to the GTP cyclohydrolase I family. QueF type 2 subfamily. As to quaternary structure, homodimer.

The protein resides in the cytoplasm. The enzyme catalyses 7-aminomethyl-7-carbaguanine + 2 NADP(+) = 7-cyano-7-deazaguanine + 2 NADPH + 3 H(+). The protein operates within tRNA modification; tRNA-queuosine biosynthesis. Its function is as follows. Catalyzes the NADPH-dependent reduction of 7-cyano-7-deazaguanine (preQ0) to 7-aminomethyl-7-deazaguanine (preQ1). This is NADPH-dependent 7-cyano-7-deazaguanine reductase from Salmonella paratyphi B (strain ATCC BAA-1250 / SPB7).